Here is a 74-residue protein sequence, read N- to C-terminus: ATP synthase subunit c (74 aa).

2 consecutive transmembrane segments (helical) span residues 8-28 (FIGAGLAAIGMIGSGIGVGNI) and 52-72 (IGFAVTEAIALFALVVALMVL).

This sequence belongs to the ATPase C chain family. In terms of assembly, F-type ATPases have 2 components, F(1) - the catalytic core - and F(0) - the membrane proton channel. F(1) has five subunits: alpha(3), beta(3), gamma(1), delta(1), epsilon(1). F(0) has three main subunits: a(1), b(2) and c(10-14). The alpha and beta chains form an alternating ring which encloses part of the gamma chain. F(1) is attached to F(0) by a central stalk formed by the gamma and epsilon chains, while a peripheral stalk is formed by the delta and b chains.

The protein localises to the cell inner membrane. In terms of biological role, f(1)F(0) ATP synthase produces ATP from ADP in the presence of a proton or sodium gradient. F-type ATPases consist of two structural domains, F(1) containing the extramembraneous catalytic core and F(0) containing the membrane proton channel, linked together by a central stalk and a peripheral stalk. During catalysis, ATP synthesis in the catalytic domain of F(1) is coupled via a rotary mechanism of the central stalk subunits to proton translocation. Key component of the F(0) channel; it plays a direct role in translocation across the membrane. A homomeric c-ring of between 10-14 subunits forms the central stalk rotor element with the F(1) delta and epsilon subunits. The polypeptide is ATP synthase subunit c (Paramagnetospirillum magneticum (strain ATCC 700264 / AMB-1) (Magnetospirillum magneticum)).